Reading from the N-terminus, the 125-residue chain is Probable endoribonuclease HigB1 (125 aa).

Belongs to the mycobacterial HigB family.

Functionally, toxic component of an atypical, type II toxin-antitoxin chaperone (TAC) system. Probably an endoribonuclease, neutralized by its cognate antitoxin HigA which also requires SecB-like chaperone MT2006 (AC Q7D7P7). This chain is Probable endoribonuclease HigB1, found in Mycobacterium tuberculosis (strain CDC 1551 / Oshkosh).